Consider the following 113-residue polypeptide: UPF0342 protein spyM18_0873 (113 aa).

Belongs to the UPF0342 family.

In Streptococcus pyogenes serotype M18 (strain MGAS8232), this protein is UPF0342 protein spyM18_0873.